A 415-amino-acid polypeptide reads, in one-letter code: Gamma-glutamyl phosphate reductase (415 aa).

It belongs to the gamma-glutamyl phosphate reductase family.

The protein resides in the cytoplasm. The enzyme catalyses L-glutamate 5-semialdehyde + phosphate + NADP(+) = L-glutamyl 5-phosphate + NADPH + H(+). The protein operates within amino-acid biosynthesis; L-proline biosynthesis; L-glutamate 5-semialdehyde from L-glutamate: step 2/2. Catalyzes the NADPH-dependent reduction of L-glutamate 5-phosphate into L-glutamate 5-semialdehyde and phosphate. The product spontaneously undergoes cyclization to form 1-pyrroline-5-carboxylate. The chain is Gamma-glutamyl phosphate reductase from Bacillus mycoides (strain KBAB4) (Bacillus weihenstephanensis).